Here is a 358-residue protein sequence, read N- to C-terminus: MLERLNFIENKYEELSNKISDPSVMANQKEWQKLCKEHADLEIIVNTYREYKKAQEDLESDKEMLKEESDKELREMAQEEIKELTLKLEDLERELTILLLPKDPNDDKDVFIEIRAGAGGEEAALFASNLLRMYTRYAERKNWKVETISLNATDIGGFKEVTVAVKGKGAYSRLKYESGVHRVQRVPDTESSGRIHTSTATVAVLPEVDDVDININANDLRIDVYRASGHGGQCVNTTDSAVRITHLPTGLVVTCQDEKSQLKNKEKAMKVLKARLFEAAEAERAASIAEDRKSQVGTGDRSERIRTYNYPQGRITDHRIGLTLYKLETFLDGDIDEAIEALVTEDQAEKMKDLGRVN.

Gln-233 is modified (N5-methylglutamine).

The protein belongs to the prokaryotic/mitochondrial release factor family. Methylated by PrmC. Methylation increases the termination efficiency of RF1.

Its subcellular location is the cytoplasm. Peptide chain release factor 1 directs the termination of translation in response to the peptide chain termination codons UAG and UAA. This is Peptide chain release factor 1 from Clostridium botulinum (strain ATCC 19397 / Type A).